Here is a 1183-residue protein sequence, read N- to C-terminus: SRC kinase signaling inhibitor 1 (1183 aa).

The interval 1–44 (MGNAPSQDPERSSPPMLSADDAEYPREYRTLGGGGGGGSGGRRF) is disordered. Phosphoserine is present on residues Ser13 and Ser18. Residues 31 to 41 (LGGGGGGGSGG) are compositionally biased toward gly residues. Ser45 is subject to Phosphoserine. Residue Thr52 is modified to Phosphothreonine. A phosphoserine mark is found at Ser53, Ser64, Ser143, Ser165, Ser169, Ser179, and Ser225. At Tyr241 the chain carries Phosphotyrosine. The disordered stretch occupies residues 284–379 (ASRESSPTRR…ERRDVKPDED (96 aa)). Residues 286–296 (RESSPTRRLNN) are compositionally biased toward polar residues. The span at 297-306 (LSPAPHLASG) shows a compositional bias: low complexity. Phosphoserine occurs at positions 298, 307, and 324. The segment covering 313–331 (PSGLPSGLQSGSPSRSRLS) has biased composition (low complexity). Residues Arg329 and Arg336 each carry the omega-N-methylarginine modification. 3 positions are modified to phosphoserine: Ser343, Ser362, and Ser364. The span at 369-379 (LERRDVKPDED) shows a compositional bias: basic and acidic residues. Tyr396 is modified (phosphotyrosine). The segment at 466-643 (YGFRLPPSSP…ASSTPAGQPT (178 aa)) is disordered. Pro residues predominate over residues 485 to 497 (PGGPPPPHSPYSG). Phosphoserine is present on residues Ser493, Ser496, and Ser500. An Omega-N-methylarginine modification is found at Arg501. 5 positions are modified to phosphoserine: Ser503, Ser513, Ser515, Ser517, and Ser522. Residues 524-541 (GGKTRSAGSASTAGAPPS) show a composition bias toward low complexity. A compositionally biased stretch (basic and acidic residues) spans 562-574 (KDTETRERMEAME). Phosphoserine is present on residues Ser598 and Ser621. Thr624 and Thr637 each carry phosphothreonine. The segment covering 634–643 (ASSTPAGQPT) has biased composition (low complexity). Residues 647-697 (RLQMQLHLRGLQNSASDLRGQLQQLRKLQLQNQESVRALLKRTEAELSMRV) are interaction with SNAP25. 2 coiled-coil regions span residues 654-674 (LRGL…LRKL) and 726-746 (EELI…IQRD). A phosphoserine mark is found at Ser844, Ser857, and Ser866. Disordered regions lie at residues 861-907 (EMPP…KAVS) and 949-1032 (DCAS…VTSK). Thr884 is subject to Phosphothreonine. Ser987 carries the post-translational modification Phosphoserine. Over residues 1002–1011 (KSPPPPPPRR) the composition is skewed to pro residues. Phosphoserine occurs at positions 1043 and 1060. Disordered stretches follow at residues 1058-1081 (AVSE…DEDD) and 1105-1183 (GASR…SISF). Positions 1135–1183 (QAQQQATKPSKEMSGSNETSSPVSEKPSASRTSIPVLTSFGARNSSISF) are enriched in polar residues.

This sequence belongs to the SRCIN1 family. Interacts with the N-terminal coiled-coil region of SNAP25. Interacts with BCAR1/p130Cas and SRC through its C-terminal domain. Interacts with CSK, CTTN, SORBS3/vinexin, SYP and MAPRE3/EB3. Tyrosine-phosphorylated in response to EGF and to cell adhesion to integrin ligands. Expressed in some primary breast carcinomas where its presence is significantly associated with increased tumor size. Not detected in normal breast tissue.

The protein localises to the cytoplasm. Its subcellular location is the cytoskeleton. It localises to the cell projection. It is found in the axon. The protein resides in the dendrite. The protein localises to the presynapse. Its subcellular location is the postsynapse. It localises to the postsynaptic density. In terms of biological role, acts as a negative regulator of SRC by activating CSK which inhibits SRC activity and downstream signaling, leading to impaired cell spreading and migration. Regulates dendritic spine morphology. Involved in calcium-dependent exocytosis. May play a role in neurotransmitter release or synapse maintenance. This is SRC kinase signaling inhibitor 1 from Homo sapiens (Human).